A 562-amino-acid chain; its full sequence is Apical membrane antigen 1 (562 aa).

The N-terminal stretch at Met-1–Cys-21 is a signal peptide. The Extracellular portion of the chain corresponds to Glu-22–Gln-484. N-linked (GlcNAc...) asparagine glycans are attached at residues Asn-84 and Asn-176. 8 cysteine pairs are disulfide-bonded: Cys-94/Cys-247, Cys-162/Cys-192, Cys-208/Cys-220, Cys-265/Cys-363, Cys-282/Cys-354, Cys-388/Cys-444, Cys-432/Cys-449, and Cys-434/Cys-451. An N-linked (GlcNAc...) asparagine glycan is attached at Asn-226. N-linked (GlcNAc...) asparagine glycosylation is found at Asn-405 and Asn-441. The helical transmembrane segment at Met-485–Phe-507 threads the bilayer. Residues Arg-508 to Tyr-562 are Cytoplasmic-facing. Residues Met-519 to Trp-543 form a disordered region.

This sequence belongs to the apicomplexan parasites AMA1 family.

It localises to the membrane. Involved in parasite invasion of erythrocytes. The protein is Apical membrane antigen 1 (AMA-1) of Plasmodium fragile.